The primary structure comprises 317 residues: MTQRFGKVGVLYGGRSAEREVSLMSGAGVHEALRSAGVDAHLFDTGLQDLTALEAAGFERVFIALHGRFGEDGAIQGALELLNIPYTGSGVTASALAMDKIMTKRVWLQHGLPTPAFEEIDSDTELRRVPDRLGLPLILKPPHEGSTVGITKVAACADMEQAYAAASHFDEVVLAEQFVRGRELTVALLGSGRNARALPVIEIVAPDGNYDYQNKYFTDVTQYFCPADLPVGVAEQIEKIAVQAYRALGCEGWGRADFILDGQNQPWLLEMNTSPGMTSHSLVPMAARAVGMSYAELCVAILADASCKLRAPARANG.

An ATP-grasp domain is found at 104 to 303 (KRVWLQHGLP…YAELCVAILA (200 aa)). 130–185 (PDRLGLPLILKPPHEGSTVGITKVAACADMEQAYAAASHFDEVVLAEQFVRGRELT) provides a ligand contact to ATP. Asp257, Glu270, and Asn272 together coordinate Mg(2+).

It belongs to the D-alanine--D-alanine ligase family. It depends on Mg(2+) as a cofactor. Mn(2+) is required as a cofactor.

The protein resides in the cytoplasm. It catalyses the reaction 2 D-alanine + ATP = D-alanyl-D-alanine + ADP + phosphate + H(+). It functions in the pathway cell wall biogenesis; peptidoglycan biosynthesis. Functionally, cell wall formation. The protein is D-alanine--D-alanine ligase of Bordetella avium (strain 197N).